Reading from the N-terminus, the 75-residue chain is Translation initiation factor IF-1 (75 aa).

The region spanning 1-75 (MANLPKEQKL…SKGRIVYRFK (75 aa)) is the S1-like domain.

This sequence belongs to the IF-1 family. Component of the 30S ribosomal translation pre-initiation complex which assembles on the 30S ribosome in the order IF-2 and IF-3, IF-1 and N-formylmethionyl-tRNA(fMet); mRNA recruitment can occur at any time during PIC assembly.

The protein resides in the cytoplasm. In terms of biological role, one of the essential components for the initiation of protein synthesis. Stabilizes the binding of IF-2 and IF-3 on the 30S subunit to which N-formylmethionyl-tRNA(fMet) subsequently binds. Helps modulate mRNA selection, yielding the 30S pre-initiation complex (PIC). Upon addition of the 50S ribosomal subunit IF-1, IF-2 and IF-3 are released leaving the mature 70S translation initiation complex. This chain is Translation initiation factor IF-1, found in Mesomycoplasma hyopneumoniae (strain 232) (Mycoplasma hyopneumoniae).